The primary structure comprises 406 residues: Oligouridylate-binding protein 1 (406 aa).

2 RRM domains span residues 49–123 (RSVY…WAYA) and 134–212 (YNIF…WAAK). The segment at 231–250 (TSGTSDDGQEKVVNEDAPEN) is disordered. One can recognise an RRM 3 domain in the interval 255 to 329 (TTVYVGNLAP…KPVKCSWGSK (75 aa)).

The protein localises to the nucleus. In terms of biological role, heterogeneous nuclear ribonucleoprotein (hnRNP)-like protein that acts as a component of the pre-mRNA processing machinery. Functions to facilitate the nuclear maturation of plant pre-mRNAs. Binds with high affinity to RNA molecules that contain AU-rich regions. May bind to the 3'-UTR and protects the mRNA against exonucleolytic degradation. Associates with nuclear poly(A)+ RNA in nucleus in vivo. Does not stimulate transcription or the 3' end cleavage/polyadenylation reaction. The polypeptide is Oligouridylate-binding protein 1 (UBP1) (Nicotiana plumbaginifolia (Leadwort-leaved tobacco)).